The sequence spans 623 residues: Glucokinase regulatory protein (623 aa).

SIS domains lie at valine 90–valine 286 and valine 320–phenylalanine 476. Beta-D-fructose 1-phosphate-binding positions include threonine 109–serine 110, glutamate 153, and serine 179–glycine 181. Residue threonine 109–serine 110 participates in beta-D-fructose 6-phosphate binding. Serine 179–glycine 181 is a binding site for beta-D-fructose 6-phosphate. The segment at alanine 199–valine 200 is important for interaction with GCK. Glutamate 348 is a beta-D-fructose 1-phosphate binding site. Residues leucine 463 to phenylalanine 465 are essential for interaction with GCK.

The protein belongs to the GCKR family. In terms of assembly, interacts (fructose 6-phosphate bound form) with GCK.

The protein resides in the cytoplasm. It localises to the nucleus. Its subcellular location is the mitochondrion. In terms of biological role, regulates glucokinase (GCK) by forming an inactive complex with this enzyme. Acts by promoting GCK recruitment to the nucleus, possibly to provide a reserve of GCK that can be quickly released in the cytoplasm after a meal. The affinity of GCKR for GCK is modulated by fructose metabolites: GCKR with bound fructose 6-phosphate has increased affinity for GCK, while GCKR with bound fructose 1-phosphate has strongly decreased affinity for GCK and does not inhibit GCK activity. In Mus musculus (Mouse), this protein is Glucokinase regulatory protein.